Consider the following 204-residue polypeptide: MSNPIKIGIGGPVGAGKTQLIEKVVKRLAKEMSIGVITNDIYTKEDEKILVNTGVLPEDRIIGVETGGCPHTAIREDASMNFAAIDELLERNDDIELIFIESGGDNLAATFSPELVDFSIYIIDVAQGEKIPRKGGQGMIKSDFFIINKTDLAPYVGASLDQMAKDTEVFRGNRPFAFTNLKTDEGLEKVIEWIEHDVLLKGLT.

11–18 (GPVGAGKT) lines the GTP pocket.

Belongs to the SIMIBI class G3E GTPase family. UreG subfamily. As to quaternary structure, homodimer. UreD, UreF and UreG form a complex that acts as a GTP-hydrolysis-dependent molecular chaperone, activating the urease apoprotein by helping to assemble the nickel containing metallocenter of UreC. The UreE protein probably delivers the nickel.

The protein resides in the cytoplasm. Facilitates the functional incorporation of the urease nickel metallocenter. This process requires GTP hydrolysis, probably effectuated by UreG. The polypeptide is Urease accessory protein UreG (Staphylococcus epidermidis (strain ATCC 12228 / FDA PCI 1200)).